Consider the following 364-residue polypeptide: DNA replication and repair protein RecF (364 aa).

Residue 33–40 (GENGSGKT) coordinates ATP.

The protein belongs to the RecF family.

The protein resides in the cytoplasm. The RecF protein is involved in DNA metabolism; it is required for DNA replication and normal SOS inducibility. RecF binds preferentially to single-stranded, linear DNA. It also seems to bind ATP. In Rickettsia felis (strain ATCC VR-1525 / URRWXCal2) (Rickettsia azadi), this protein is DNA replication and repair protein RecF.